The following is a 261-amino-acid chain: Ice-binding protein (261 aa).

The signal sequence occupies residues 1–20; sequence MSLLSIITIGLAGLGGLVNG. Residue asparagine 185 is glycosylated (N-linked (GlcNAc...) asparagine).

Belongs to the ice-binding protein family. As to quaternary structure, homodimer. Dimerization is not required for the thermal hysteresis (TH) activity. Post-translationally, glycosylated. Glycosylation is not required for the thermal hysteresis (TH) activity. Glycosylation may increase stability and secretion of this protein.

It is found in the secreted. Confers freeze tolerance. Binds to the surface of ice crystals and inhibits their growth. Has low thermal hysteresis (TH) activity, which is the ability to lower the freezing point of an aqueous solution below its melting point. The TH activity of this protein is approximately 0.2 degrees Celsius at 50 uM and 0.3 degrees Celsius at 400 uM. The polypeptide is Ice-binding protein (Leucosporidium sp. (strain AY30) (Arctic yeast)).